The chain runs to 191 residues: Ribosomal RNA small subunit methyltransferase G (191 aa).

S-adenosyl-L-methionine is bound by residues glycine 62, phenylalanine 67, 111-112 (IE), and arginine 124.

It belongs to the methyltransferase superfamily. RNA methyltransferase RsmG family.

It localises to the cytoplasm. The enzyme catalyses guanosine(527) in 16S rRNA + S-adenosyl-L-methionine = N(7)-methylguanosine(527) in 16S rRNA + S-adenosyl-L-homocysteine. Its function is as follows. Specifically methylates the N7 position of guanine in position 527 of 16S rRNA. In Rickettsia prowazekii (strain Madrid E), this protein is Ribosomal RNA small subunit methyltransferase G.